The chain runs to 573 residues: Urease subunit alpha (573 aa).

In terms of domain architecture, Urease spans 136 to 573; the sequence is GAIDCHVHFI…LPMAQRYFLF (438 aa). Ni(2+)-binding residues include His141, His143, and Lys224. An N6-carboxylysine modification is found at Lys224. His226 serves as a coordination point for substrate. The Ni(2+) site is built by His253 and His279. His327 (proton donor) is an active-site residue. Asp367 contributes to the Ni(2+) binding site.

This sequence belongs to the metallo-dependent hydrolases superfamily. Urease alpha subunit family. In terms of assembly, heterotrimer of UreA (gamma), UreB (beta) and UreC (alpha) subunits. Three heterotrimers associate to form the active enzyme. The cofactor is Ni cation. In terms of processing, carboxylation allows a single lysine to coordinate two nickel ions.

The protein resides in the cytoplasm. It catalyses the reaction urea + 2 H2O + H(+) = hydrogencarbonate + 2 NH4(+). The protein operates within nitrogen metabolism; urea degradation; CO(2) and NH(3) from urea (urease route): step 1/1. The polypeptide is Urease subunit alpha (Nocardia farcinica (strain IFM 10152)).